A 390-amino-acid chain; its full sequence is S-adenosylmethionine synthase 1 (390 aa).

Residue Glu9 participates in Mg(2+) binding. Position 15 (His15) interacts with ATP. Glu43 contacts K(+). L-methionine is bound by residues Glu56 and Gln99. ATP-binding positions include 167–169, 235–238, Asp246, 252–253, Ala269, Lys273, and Lys277; these read DGK, SGRF, and RK. Asp246 contacts L-methionine. Lys277 contacts L-methionine.

It belongs to the AdoMet synthase family. In terms of assembly, homotetramer. The cofactor is Mn(2+). Mg(2+) serves as cofactor. Co(2+) is required as a cofactor. It depends on K(+) as a cofactor.

The protein resides in the cytoplasm. It carries out the reaction L-methionine + ATP + H2O = S-adenosyl-L-methionine + phosphate + diphosphate. The protein operates within amino-acid biosynthesis; S-adenosyl-L-methionine biosynthesis; S-adenosyl-L-methionine from L-methionine: step 1/1. Functionally, catalyzes the formation of S-adenosylmethionine from methionine and ATP. The reaction comprises two steps that are both catalyzed by the same enzyme: formation of S-adenosylmethionine (AdoMet) and triphosphate, and subsequent hydrolysis of the triphosphate. The protein is S-adenosylmethionine synthase 1 (SAMS1) of Nicotiana tabacum (Common tobacco).